We begin with the raw amino-acid sequence, 316 residues long: uncharacterized protein (316 aa).

The segment at 1–34 is disordered; it reads MATKRKIGDGYSSSDDNQPKRERSEGGEDQQLVP. The segment covering 17-26 has biased composition (basic and acidic residues); sequence NQPKRERSEG.

This is an uncharacterized protein from Lepidoptera (butterflies and moths).